A 269-amino-acid chain; its full sequence is Eukaryotic translation initiation factor 3 subunit G-2 (269 aa).

The RRM domain maps to 189–267 (SAVRISNLSE…LILCVEWSKP (79 aa)).

Belongs to the eIF-3 subunit G family. In terms of assembly, component of the eukaryotic translation initiation factor 3 (eIF-3) complex. The eIF-3 complex interacts with pix.

The protein resides in the cytoplasm. Its function is as follows. RNA-binding component of the eukaryotic translation initiation factor 3 (eIF-3) complex, which is involved in protein synthesis of a specialized repertoire of mRNAs and, together with other initiation factors, stimulates binding of mRNA and methionyl-tRNAi to the 40S ribosome. The eIF-3 complex specifically targets and initiates translation of a subset of mRNAs involved in cell proliferation. This subunit can bind 18S rRNA. The polypeptide is Eukaryotic translation initiation factor 3 subunit G-2 (Drosophila ananassae (Fruit fly)).